The primary structure comprises 439 residues: Trigger factor (439 aa).

The PPIase FKBP-type domain maps to 163-248 (GDIAVIDFEG…LNQIKERVLP (86 aa)).

It belongs to the FKBP-type PPIase family. Tig subfamily.

The protein resides in the cytoplasm. It carries out the reaction [protein]-peptidylproline (omega=180) = [protein]-peptidylproline (omega=0). In terms of biological role, involved in protein export. Acts as a chaperone by maintaining the newly synthesized protein in an open conformation. Functions as a peptidyl-prolyl cis-trans isomerase. This Syntrophotalea carbinolica (strain DSM 2380 / NBRC 103641 / GraBd1) (Pelobacter carbinolicus) protein is Trigger factor.